We begin with the raw amino-acid sequence, 143 residues long: Large ribosomal subunit protein uL11 (143 aa).

It belongs to the universal ribosomal protein uL11 family. In terms of assembly, part of the ribosomal stalk of the 50S ribosomal subunit. Interacts with L10 and the large rRNA to form the base of the stalk. L10 forms an elongated spine to which 2 L12 dimers bind in a sequential fashion forming a pentameric L10(L12)2(L12)2 complex. One or more lysine residues are methylated.

Functionally, forms part of the ribosomal stalk which helps the ribosome interact with GTP-bound translation factors. The protein is Large ribosomal subunit protein uL11 of Agrobacterium fabrum (strain C58 / ATCC 33970) (Agrobacterium tumefaciens (strain C58)).